The chain runs to 333 residues: UbiA prenyltransferase domain-containing protein 1 (333 aa).

The interval 13–33 is disordered; sequence NAESPRGGERNDCGAGAERGP. Transmembrane regions (helical) follow at residues 78 to 98, 129 to 149, 155 to 175, 177 to 197, 199 to 219, 240 to 260, 265 to 285, and 310 to 330; these read LLVG…LVNT, FGVF…AVST, LALV…GIGF, YVAL…VMFA, AVQV…LALS, IVTL…TVLL, LIFC…LLTI, and LNLL…AGAL.

Belongs to the UbiA prenyltransferase family.

Its subcellular location is the endoplasmic reticulum membrane. The protein localises to the golgi apparatus membrane. The protein resides in the mitochondrion membrane. It catalyses the reaction menadiol + (2E,6E,10E)-geranylgeranyl diphosphate = menaquinol-4 + diphosphate. The enzyme catalyses all-trans-decaprenyl diphosphate + 4-hydroxybenzoate = 4-hydroxy-3-(all-trans-decaprenyl)benzoate + diphosphate. The protein operates within quinol/quinone metabolism; menaquinone biosynthesis. Its pathway is cofactor biosynthesis; ubiquinone biosynthesis. In terms of biological role, prenyltransferase that mediates the formation of menaquinone-4 (MK-4) and coenzyme Q10. MK-4 is a vitamin K2 isoform required for endothelial cell development. Mediates the conversion of phylloquinone (PK) into MK-4, probably by cleaving the side chain of phylloquinone (PK) to release 2-methyl-1,4-naphthoquinone (menadione; K3) and then prenylating it with geranylgeranyl pyrophosphate (GGPP) to form MK-4. Also plays a role in cardiovascular development independently of MK-4 biosynthesis, by acting as a coenzyme Q10 biosynthetic enzyme: coenzyme Q10, also named ubiquinone, plays an important antioxidant role in the cardiovascular system. Mediates biosynthesis of coenzyme Q10 in the Golgi membrane, leading to protect cardiovascular tissues from NOS3/eNOS-dependent oxidative stress. The sequence is that of UbiA prenyltransferase domain-containing protein 1 (UBIAD1) from Gallus gallus (Chicken).